A 298-amino-acid polypeptide reads, in one-letter code: Cyclin-dependent kinase 2 homolog (298 aa).

In terms of domain architecture, Protein kinase spans Tyr4–Phe284. ATP is bound by residues Ile10–Val18 and Lys32. Phosphothreonine is present on Thr14. The residue at position 15 (Tyr15) is a Phosphotyrosine. Catalysis depends on Asp125, which acts as the Proton acceptor. Phosphothreonine is present on Thr158.

This sequence belongs to the protein kinase superfamily. CMGC Ser/Thr protein kinase family. CDC2/CDKX subfamily. In terms of assembly, may form a complex composed of at least the catalytic subunit CRK2 and a cyclin. The cofactor is Mg(2+).

The protein localises to the cytoplasm. The catalysed reaction is L-seryl-[protein] + ATP = O-phospho-L-seryl-[protein] + ADP + H(+). It catalyses the reaction L-threonyl-[protein] + ATP = O-phospho-L-threonyl-[protein] + ADP + H(+). It carries out the reaction [DNA-directed RNA polymerase] + ATP = phospho-[DNA-directed RNA polymerase] + ADP + H(+). Phosphorylation at Thr-14 or Tyr-15 inactivates the enzyme, while phosphorylation at Thr-158 activates it. Functionally, serine/threonine-protein kinase. Involved in the control of the cell cycle. Required for entry into S-phase and mitosis. Probable component of the kinase complex that phosphorylates the repetitive C-terminus of RNA polymerase II. This is Cyclin-dependent kinase 2 homolog from Theileria annulata.